We begin with the raw amino-acid sequence, 238 residues long: Small ribosomal subunit protein uS2 (238 aa).

The protein belongs to the universal ribosomal protein uS2 family.

This Chloroflexus aggregans (strain MD-66 / DSM 9485) protein is Small ribosomal subunit protein uS2.